A 439-amino-acid chain; its full sequence is Putative FBD-associated F-box protein At1g05080 (439 aa).

The F-box domain occupies 12-58 (EDRISVLPEDLLVVILDLLPTKDVVATMILSKRWLSIWTMVRTLEYT). Positions 360 to 410 (SWKQPSHVPECLSSQLEIFEWRDYGDRIIEEEFLTYVLANSKRLKTATISL) constitute an FBD domain.

This Arabidopsis thaliana (Mouse-ear cress) protein is Putative FBD-associated F-box protein At1g05080.